A 230-amino-acid polypeptide reads, in one-letter code: Large ribosomal subunit protein uL1 (230 aa).

Belongs to the universal ribosomal protein uL1 family. In terms of assembly, part of the 50S ribosomal subunit.

Binds directly to 23S rRNA. The L1 stalk is quite mobile in the ribosome, and is involved in E site tRNA release. In terms of biological role, protein L1 is also a translational repressor protein, it controls the translation of the L11 operon by binding to its mRNA. In Rubrobacter xylanophilus (strain DSM 9941 / JCM 11954 / NBRC 16129 / PRD-1), this protein is Large ribosomal subunit protein uL1.